A 453-amino-acid polypeptide reads, in one-letter code: Vacuolar cation/proton exchanger 1b (453 aa).

The Cytoplasmic portion of the chain corresponds to 1–67 (MPVSRMMMES…LRSLLANLND (67 aa)). The chain crosses the membrane as a helical span at residues 68-85 (VLLTTRLFLLFPAVLLAI). Residues 86–91 (AATYLH) are Extracellular-facing. Residues 92 to 109 (FGQVWVFVLSLIGLVPLA) form a helical membrane-spanning segment. Over 110 to 126 (ERLSFLTEQIAFYTGPT) the chain is Cytoplasmic. A helical membrane pass occupies residues 127-147 (VGGLLNATFGNVTEVIIALLA). The segment at 136 to 171 (GNVTEVIIALLALREGKIEVVKCSLLGSILSNLLLV) is cation selection. The Extracellular portion of the chain corresponds to 148–160 (LREGKIEVVKCSL). A helical transmembrane segment spans residues 161 to 181 (LGSILSNLLLVLGTSLFLAGI). The Cytoplasmic portion of the chain corresponds to 182 to 194 (ANLRAHQPYDTKQ). A helical membrane pass occupies residues 195-215 (AHVNTALLMLAVLCHSLPLML). At 216-232 (RYAVTSGDHAIVSGDAA) the chain is on the extracellular side. A helical transmembrane segment spans residues 233 to 253 (LHLSRACSILMLIAYLAYLFF). Residues 254 to 283 (QLNTHRQLFEPQQVEDDDDDDLVIAQDDEP) are Cytoplasmic-facing. The chain crosses the membrane as a helical span at residues 284-304 (VLGFSSAMIWLALMTLLTALL). At 305 to 327 (SGYVVSTIEAASESWELSVSFIS) the chain is on the extracellular side. Residues 328 to 348 (IILLPIVGNAAEHAGAVIFAL) traverse the membrane as a helical segment. The interval 335–370 (GNAAEHAGAVIFALKNKMDITLGVSLGSATQISMFV) is cation selection. The Cytoplasmic segment spans residues 349–364 (KNKMDITLGVSLGSAT). A helical transmembrane segment spans residues 365-385 (QISMFVVPVSVIVAWTMGIPM). Residues 386–388 (DLD) are Extracellular-facing. A helical membrane pass occupies residues 389–409 (FNLLETGSLFLAILVTAFTLQ). Residues 410-414 (EGESH) are Cytoplasmic-facing. The helical transmembrane segment at 415–435 (YLKGLILVLCYAVISVCFFVI) threads the bilayer. Residues 436-453 (RRRSAGGTDGVHHLDVIV) lie on the Extracellular side of the membrane.

Belongs to the Ca(2+):cation antiporter (CaCA) (TC 2.A.19) family. Cation/proton exchanger (CAX) subfamily. Expressed in embryo and roots.

The protein localises to the vacuole membrane. Functionally, vacuolar cation/proton exchanger (CAX). Translocates Ca(2+) and other metal ions into vacuoles using the proton gradient formed by H(+)-ATPase and H(+)-pyrophosphatase. In Oryza sativa subsp. japonica (Rice), this protein is Vacuolar cation/proton exchanger 1b (CAX1b).